The sequence spans 481 residues: ATP synthase subunit beta, chloroplastic (481 aa).

162–169 serves as a coordination point for ATP; it reads GGAGVGKT.

It belongs to the ATPase alpha/beta chains family. In terms of assembly, F-type ATPases have 2 components, CF(1) - the catalytic core - and CF(0) - the membrane proton channel. CF(1) has five subunits: alpha(3), beta(3), gamma(1), delta(1), epsilon(1). CF(0) has four main subunits: a(1), b(1), b'(1) and c(9-12).

The protein resides in the plastid. It is found in the chloroplast thylakoid membrane. It catalyses the reaction ATP + H2O + 4 H(+)(in) = ADP + phosphate + 5 H(+)(out). Produces ATP from ADP in the presence of a proton gradient across the membrane. The catalytic sites are hosted primarily by the beta subunits. The polypeptide is ATP synthase subunit beta, chloroplastic (Oltmannsiellopsis viridis (Marine flagellate)).